The following is a 476-amino-acid chain: Cobyric acid synthase (476 aa).

One can recognise a GATase cobBQ-type domain in the interval 242–428 (AFRVVVPVPP…LHGLFDTPDA (187 aa)). Cysteine 323 functions as the Nucleophile in the catalytic mechanism. Histidine 420 is a catalytic residue.

This sequence belongs to the CobB/CobQ family. CobQ subfamily.

Its pathway is cofactor biosynthesis; adenosylcobalamin biosynthesis. Its function is as follows. Catalyzes amidations at positions B, D, E, and G on adenosylcobyrinic A,C-diamide. NH(2) groups are provided by glutamine, and one molecule of ATP is hydrogenolyzed for each amidation. In Janthinobacterium sp. (strain Marseille) (Minibacterium massiliensis), this protein is Cobyric acid synthase.